The following is a 282-amino-acid chain: Elongation factor Ts (282 aa).

The interval 80–83 is involved in Mg(2+) ion dislocation from EF-Tu; that stretch reads TDFV.

This sequence belongs to the EF-Ts family.

The protein localises to the cytoplasm. Associates with the EF-Tu.GDP complex and induces the exchange of GDP to GTP. It remains bound to the aminoacyl-tRNA.EF-Tu.GTP complex up to the GTP hydrolysis stage on the ribosome. The protein is Elongation factor Ts of Chlamydia trachomatis serovar L2 (strain ATCC VR-902B / DSM 19102 / 434/Bu).